The primary structure comprises 626 residues: 4-hydroxy-3-methylbut-2-en-1-yl diphosphate synthase (flavodoxin) (626 aa).

Residues Cys-521, Cys-524, Cys-555, and Glu-562 each contribute to the [4Fe-4S] cluster site.

The protein belongs to the IspG family. The cofactor is [4Fe-4S] cluster.

The enzyme catalyses (2E)-4-hydroxy-3-methylbut-2-enyl diphosphate + oxidized [flavodoxin] + H2O + 2 H(+) = 2-C-methyl-D-erythritol 2,4-cyclic diphosphate + reduced [flavodoxin]. It functions in the pathway isoprenoid biosynthesis; isopentenyl diphosphate biosynthesis via DXP pathway; isopentenyl diphosphate from 1-deoxy-D-xylulose 5-phosphate: step 5/6. In terms of biological role, converts 2C-methyl-D-erythritol 2,4-cyclodiphosphate (ME-2,4cPP) into 1-hydroxy-2-methyl-2-(E)-butenyl 4-diphosphate. The chain is 4-hydroxy-3-methylbut-2-en-1-yl diphosphate synthase (flavodoxin) from Bacteroides fragilis (strain YCH46).